Here is a 270-residue protein sequence, read N- to C-terminus: Ethanolamine ammonia-lyase small subunit (270 aa).

Residues Val166, Glu187, and Cys216 each coordinate adenosylcob(III)alamin.

This sequence belongs to the EutC family. The basic unit is a heterodimer which dimerizes to form tetramers. The heterotetramers trimerize; 6 large subunits form a core ring with 6 small subunits projecting outwards. Adenosylcob(III)alamin is required as a cofactor.

The protein resides in the bacterial microcompartment. It carries out the reaction ethanolamine = acetaldehyde + NH4(+). It functions in the pathway amine and polyamine degradation; ethanolamine degradation. Its function is as follows. Catalyzes the deamination of various vicinal amino-alcohols to oxo compounds. Allows this organism to utilize ethanolamine as the sole source of nitrogen and carbon in the presence of external vitamin B12. The chain is Ethanolamine ammonia-lyase small subunit from Ralstonia nicotianae (strain ATCC BAA-1114 / GMI1000) (Ralstonia solanacearum).